The following is a 271-amino-acid chain: GPN-loop GTPase 3 (271 aa).

13-18 (GAGKST) is a binding site for GTP. A Gly-Pro-Asn (GPN)-loop; involved in dimer interface motif is present at residues 70–72 (GPN). 173-176 (SKVD) provides a ligand contact to GTP.

This sequence belongs to the GPN-loop GTPase family. As to quaternary structure, heterodimers with GPN1 or GPN2. Binds to RNA polymerase II (RNAPII).

Small GTPase required for proper nuclear import of RNA polymerase II and III (RNAPII and RNAPIII). May act at an RNAP assembly step prior to nuclear import. The chain is GPN-loop GTPase 3 from Eremothecium gossypii (strain ATCC 10895 / CBS 109.51 / FGSC 9923 / NRRL Y-1056) (Yeast).